A 334-amino-acid polypeptide reads, in one-letter code: Fructose-1,6-bisphosphatase class 1 (334 aa).

Residues Glu-91, Asp-113, Leu-115, and Asp-116 each coordinate Mg(2+). Substrate-binding positions include 116 to 119, Asn-208, and Lys-274; that span reads DGSS. Glu-280 contributes to the Mg(2+) binding site.

Belongs to the FBPase class 1 family. In terms of assembly, homotetramer. Requires Mg(2+) as cofactor.

The protein resides in the cytoplasm. The enzyme catalyses beta-D-fructose 1,6-bisphosphate + H2O = beta-D-fructose 6-phosphate + phosphate. It functions in the pathway carbohydrate biosynthesis; gluconeogenesis. This chain is Fructose-1,6-bisphosphatase class 1, found in Herminiimonas arsenicoxydans.